A 122-amino-acid chain; its full sequence is Large ribosomal subunit protein uL14 (122 aa).

It belongs to the universal ribosomal protein uL14 family. As to quaternary structure, part of the 50S ribosomal subunit. Forms a cluster with proteins L3 and L19. In the 70S ribosome, L14 and L19 interact and together make contacts with the 16S rRNA in bridges B5 and B8.

Binds to 23S rRNA. Forms part of two intersubunit bridges in the 70S ribosome. The polypeptide is Large ribosomal subunit protein uL14 (Bdellovibrio bacteriovorus (strain ATCC 15356 / DSM 50701 / NCIMB 9529 / HD100)).